Consider the following 64-residue polypeptide: DNA-binding protein 7b (64 aa).

Belongs to the 7 kDa DNA-binding/endoribonuclease P2 family. In terms of assembly, monomer.

Its subcellular location is the cytoplasm. Functionally, can constrain negative DNA supercoils. May be involved in maintaining the integrity of the genome at high temperature. The protein is DNA-binding protein 7b of Saccharolobus islandicus (strain HVE10/4) (Sulfolobus islandicus).